The chain runs to 766 residues: DENN domain-containing protein 1B (766 aa).

A uDENN domain is found at 14–143 (DLVLKVKCHA…YNHPVPKANT (130 aa)). One can recognise a cDENN domain in the interval 160–296 (GLPTIPESRN…VVSALKNKLK (137 aa)). A dDENN domain is found at 298 to 375 (QSTATGDGVA…DGRLAKLNAG (78 aa)). An FXDXF motif motif is present at residues 378 to 382 (FSDIF). The disordered stretch occupies residues 472–523 (NEKGENREKHKLSQTHLKRPHKSLDGTLYDDDDDDDDIERASKISSEDGEET). Residues 480–492 (KHKLSQTHLKRPH) show a composition bias toward basic residues. Residues 499 to 509 (LYDDDDDDDDI) are compositionally biased toward acidic residues. Y500 bears the Phosphotyrosine mark. 4 positions are modified to phosphoserine: S516, S517, S530, and S533. The short motif at 547 to 556 (DLLGEILDTL) is the Clathrin box element. Disordered stretches follow at residues 611–634 (LGQD…VSSG) and 652–732 (LCAD…KPSK). Residues S632 and S633 each carry the phosphoserine modification. The span at 694 to 704 (TPGQAPLQSED) shows a compositional bias: polar residues. A compositionally biased stretch (basic and acidic residues) spans 722–732 (KAGKEDTKPSK).

Interacts with RAB35. Interacts with clathrin heavy chain/CLTC. Interacts with components of the adapter protein complex 2 (AP-2) AP2A2 and AP2B1. Interacts with CD3E. In terms of processing, phosphorylated on serine and/or threonine, possibly regulating the guanine nucleotide exchange factor (GEF) activity. In terms of tissue distribution, expressed in a subset of dendritic cells (DCs).

The protein resides in the cytoplasm. It localises to the cytosol. It is found in the cytoplasmic vesicle. Its subcellular location is the clathrin-coated vesicle. Guanine nucleotide exchange factor (GEF) for RAB35 that acts as a regulator of T-cell receptor (TCR) internalization in TH2 cells. Acts by promoting the exchange of GDP to GTP, converting inactive GDP-bound RAB35 into its active GTP-bound form. Plays a role in clathrin-mediated endocytosis. Controls cytokine production in TH2 lymphocytes by controlling the rate of TCR internalization and routing to endosomes: acts by mediating clathrin-mediated endocytosis of TCR via its interaction with the adapter protein complex 2 (AP-2) and GEF activity. Dysregulation leads to impaired TCR down-modulation and recycling, affecting cytokine production in TH2 cells. This Mus musculus (Mouse) protein is DENN domain-containing protein 1B.